Here is a 416-residue protein sequence, read N- to C-terminus: Glutamyl-tRNA reductase (416 aa).

Residues 49–52, Ser105, 110–112, and Gln116 each bind substrate; these read TCNR and EPQ. The active-site Nucleophile is Cys50. 185–190 provides a ligand contact to NADP(+); the sequence is GAGETI.

This sequence belongs to the glutamyl-tRNA reductase family. Homodimer.

The catalysed reaction is (S)-4-amino-5-oxopentanoate + tRNA(Glu) + NADP(+) = L-glutamyl-tRNA(Glu) + NADPH + H(+). The protein operates within porphyrin-containing compound metabolism; protoporphyrin-IX biosynthesis; 5-aminolevulinate from L-glutamyl-tRNA(Glu): step 1/2. Its function is as follows. Catalyzes the NADPH-dependent reduction of glutamyl-tRNA(Glu) to glutamate 1-semialdehyde (GSA). The protein is Glutamyl-tRNA reductase of Shewanella oneidensis (strain ATCC 700550 / JCM 31522 / CIP 106686 / LMG 19005 / NCIMB 14063 / MR-1).